A 305-amino-acid polypeptide reads, in one-letter code: Protein FdhE homolog (305 aa).

The protein belongs to the FdhE family.

The protein localises to the cytoplasm. Functionally, necessary for formate dehydrogenase activity. This is Protein FdhE homolog from Stutzerimonas stutzeri (strain A1501) (Pseudomonas stutzeri).